A 149-amino-acid polypeptide reads, in one-letter code: NPC intracellular cholesterol transporter 2 (149 aa).

Residues 1–21 (MRLLVAAFLLLALGDLGPGGA) form the signal peptide. 3 disulfides stabilise this stretch: Cys-27–Cys-140, Cys-42–Cys-47, and Cys-93–Cys-99. Residue Asn-58 is glycosylated (N-linked (GlcNAc...) asparagine). At Lys-116 the chain carries N6-acetyllysine.

Belongs to the NPC2 family. Interacts with NPC1 (via the second lumenal domain) in a cholestrol-dependent manner. Interacts with NUS1/NgBR, the interaction stabilizes NCP2 and regulates cholesterol trafficking. Interacts with DHDDS. Interacts with NEDD4L (via C2 domain). Interacts with NPC1L1. As to expression, epididymis. High levels are found in the caput and corpus regions. Weaker levels in the distal cauda and in the efferent ducts.

It localises to the secreted. The protein resides in the endoplasmic reticulum. The protein localises to the lysosome. It carries out the reaction cholesterol(in) = cholesterol(out). Functionally, intracellular cholesterol transporter which acts in concert with NPC1 and plays an important role in the egress of cholesterol from the lysosomal compartment. Unesterified cholesterol that has been released from LDLs in the lumen of the late endosomes/lysosomes is transferred by NPC2 to the cholesterol-binding pocket in the N-terminal domain of NPC1. May bind and mobilize cholesterol that is associated with membranes. NPC2 binds cholesterol with a 1:1 stoichiometry. Can bind a variety of sterols, including lathosterol, desmosterol and the plant sterols stigmasterol and beta-sitosterol. The secreted form of NCP2 regulates biliary cholesterol secretion via stimulation of ABCG5/ABCG8-mediated cholesterol transport. In Canis lupus familiaris (Dog), this protein is NPC intracellular cholesterol transporter 2.